The sequence spans 497 residues: uncharacterized protein (497 aa).

ABC transporter domains are found at residues 9–247 (VSVR…MGQA) and 256–496 (ARPA…TGMA). 41-48 (GGNGAGKS) is a binding site for ATP.

Belongs to the ABC transporter superfamily. Ribose importer (TC 3.A.1.2.1) family.

Its subcellular location is the cell membrane. In terms of biological role, probably part of the binding-protein-dependent transport system y4mIJK. This system probably transports a sugar. Probably responsible for energy coupling to the transport system. This is an uncharacterized protein from Sinorhizobium fredii (strain NBRC 101917 / NGR234).